The chain runs to 92 residues: Calitoxin (92 aa).

The N-terminal stretch at 1–20 (MKTQVLVVLVLCVVFCLAES) is a signal peptide. Positions 21–42 (RNSMTSEERGLVSLMRQRDDIA) are excised as a propeptide. Cystine bridges form between cysteine 47–cysteine 86, cysteine 49–cysteine 77, and cysteine 67–cysteine 87.

The protein belongs to the sea anemone sodium channel inhibitory toxin family. Expressed both outside and in acontia, a specialised envenomation structure laden with batteries of venom-containing nematocysts found only in the superfamily Metridioidea.

It is found in the secreted. The protein resides in the nematocyst. Functionally, in neuromuscular preparation of crustaceans, the toxin increased neurotransmitter release, causing repetitive firing of the axons. May affect sodium channels (Nav). The sequence is that of Calitoxin from Calliactis polypus (Hermit crab anemone).